We begin with the raw amino-acid sequence, 188 residues long: MEPNPSDPVLTDRIQAIVTTEKSIDEMMKCAREIIQDLGKEKQIGKNKMEDNANNFKKLITQVENELSAQMQYLSHVCVGSSHQGSTFGVLQNSLLAQSGLSSLHSELFQIVRYLDPTSDEPQTTEEDEEDGSDDLNEDGADGAPSSTVTSSTTDGSGGGDDAASSSAPRSQEESGRQMTDDDDDMEQ.

The stretch at 46–72 (KNKMEDNANNFKKLITQVENELSAQMQ) forms a coiled coil. Residues 116-188 (DPTSDEPQTT…MTDDDDDMEQ (73 aa)) form a disordered region. Residues 123–141 (QTTEEDEEDGSDDLNEDGA) show a composition bias toward acidic residues. The segment covering 146–155 (SSTVTSSTTD) has biased composition (low complexity). Basic and acidic residues predominate over residues 171–180 (SQEESGRQMT).

This sequence belongs to the Mediator complex subunit 11 family. In terms of assembly, component of the Mediator complex.

The protein localises to the nucleus. In terms of biological role, component of the Mediator complex, a coactivator involved in the regulated transcription of nearly all RNA polymerase II-dependent genes. Mediator functions as a bridge to convey information from gene-specific regulatory proteins to the basal RNA polymerase II transcription machinery. Mediator is recruited to promoters by direct interactions with regulatory proteins and serves as a scaffold for the assembly of a functional pre-initiation complex with RNA polymerase II and the general transcription factors. The protein is Mediator of RNA polymerase II transcription subunit 11 (mdt-11) of Caenorhabditis elegans.